The chain runs to 1841 residues: Sucrase-isomaltase, intestinal (1841 aa).

Topologically, residues 1-12 (MAKKKFSALEIS) are cytoplasmic. Ser-7 is subject to Phosphoserine; by PKA. A helical; Signal-anchor for type II membrane protein transmembrane segment spans residues 13 to 32 (LIVLFIIVTAIAIALVTVLA). The Lumenal portion of the chain corresponds to 33 to 1841 (TKVPAVEEIK…LDEPIQITWS (1809 aa)). Positions 42–81 (KSPTPTSNSTPTSTPTSTSTPTSTSTPSPGKCPPEQGEPI) are disordered. Over residues 43–70 (SPTPTSNSTPTSTPTSTSTPTSTSTPSP) the composition is skewed to low complexity. The P-type 1 domain occupies 71-120 (GKCPPEQGEPINERINCIPEQHPTKAICEERGCCWRPWNNTVIPWCFFAD). 3 disulfide bridges follow: Cys-73–Cys-104, Cys-87–Cys-103, and Cys-98–Cys-116. Asn-109 carries an N-linked (GlcNAc...) asparagine glycan. The isomaltase stretch occupies residues 120–1013 (DNHGYNAESI…ELQLNPPNAR (894 aa)). Substrate is bound by residues Asp-274 and Asp-398. 2 positions are modified to sulfotyrosine: Tyr-401 and Tyr-410. An N-linked (GlcNAc...) asparagine glycan is attached at Asn-464. The active-site Nucleophile; for isomaltase activity is the Asp-514. A substrate-binding site is contributed by Arg-599. Catalysis depends on Asp-615, which acts as the For isomaltase activity. Cys-646 and Cys-657 form a disulfide bridge. His-673 lines the substrate pocket. N-linked (GlcNAc...) asparagine glycosylation is found at Asn-758, Asn-765, Asn-867, and Asn-910. Residues 936-984 (RWCRTFSDNEKFTCYPDVGTATEGTCTQRGCLWQPVSGLSNVPPYYFPP) form the P-type 2 domain. Residues 1014-1841 (IKLPSNPIST…LDEPIQITWS (828 aa)) are sucrase. 5 N-linked (GlcNAc...) asparagine glycosylation sites follow: Asn-1240, Asn-1308, Asn-1345, Asn-1359, and Asn-1373. Tyr-1387 is subject to Sulfotyrosine. Asp-1399 acts as the Nucleophile; for sucrase activity in catalysis. The For sucrase activity role is filled by Glu-1402. An N-linked (GlcNAc...) asparagine glycan is attached at Asn-1485. Catalysis depends on Asp-1512, which acts as the Proton donor; for sucrase activity. 4 N-linked (GlcNAc...) asparagine glycosylation sites follow: Asn-1513, Asn-1575, Asn-1762, and Asn-1829.

This sequence belongs to the glycosyl hydrolase 31 family. As to quaternary structure, the resulting sucrase and isomaltase subunits stay associated with one another in a complex by non-covalent linkages. In terms of processing, the precursor is proteolytically cleaved when exposed to pancreatic proteases in the intestinal lumen. Post-translationally, sulfated.

It localises to the apical cell membrane. It catalyses the reaction Hydrolysis of sucrose and maltose by an alpha-D-glucosidase-type action.. The catalysed reaction is Hydrolysis of (1-&gt;6)-alpha-D-glucosidic linkages in some oligosaccharides produced from starch and glycogen by alpha-amylase, and in isomaltose.. In terms of biological role, plays an important role in the final stage of carbohydrate digestion. Isomaltase activity is specific for both alpha-1,4- and alpha-1,6-oligosaccharides. This chain is Sucrase-isomaltase, intestinal (Si), found in Rattus norvegicus (Rat).